The sequence spans 348 residues: Dihydroorotase (348 aa).

Zn(2+) contacts are provided by His-13 and His-15. Residues 15–17 (HLR) and Asn-41 contribute to the substrate site. Positions 99, 136, and 174 each coordinate Zn(2+). Position 99 is an N6-carboxylysine (Lys-99). His-136 is a binding site for substrate. Leu-219 lines the substrate pocket. Asp-247 lines the Zn(2+) pocket. Asp-247 is a catalytic residue. Residues His-251 and Ala-263 each coordinate substrate.

This sequence belongs to the metallo-dependent hydrolases superfamily. DHOase family. Class II DHOase subfamily. In terms of assembly, homodimer. It depends on Zn(2+) as a cofactor.

It carries out the reaction (S)-dihydroorotate + H2O = N-carbamoyl-L-aspartate + H(+). The protein operates within pyrimidine metabolism; UMP biosynthesis via de novo pathway; (S)-dihydroorotate from bicarbonate: step 3/3. In terms of biological role, catalyzes the reversible cyclization of carbamoyl aspartate to dihydroorotate. The protein is Dihydroorotase of Rhizobium johnstonii (strain DSM 114642 / LMG 32736 / 3841) (Rhizobium leguminosarum bv. viciae).